The primary structure comprises 63 residues: Large ribosomal subunit protein uL29 (63 aa).

This sequence belongs to the universal ribosomal protein uL29 family.

The protein is Large ribosomal subunit protein uL29 of Psychromonas ingrahamii (strain DSM 17664 / CCUG 51855 / 37).